Here is a 127-residue protein sequence, read N- to C-terminus: uncharacterized protein (127 aa).

This is an uncharacterized protein from Homo sapiens (Human).